A 393-amino-acid chain; its full sequence is Metal tolerance protein C2 (393 aa).

The tract at residues 1 to 23 is disordered; sequence MERSISFNPRGDNELPDDRSSDV. Topologically, residues 1–113 are cytoplasmic; the sequence is MERSISFNPR…VTSGNRQMKR (113 aa). The span at 11 to 21 shows a compositional bias: basic and acidic residues; that stretch reads GDNELPDDRSS. Residues 114 to 134 traverse the membrane as a helical segment; it reads LFLLIALNVLYSTTELSIGIF. Residues 135 to 139 are Vacuolar-facing; sequence TGRVG. The helical transmembrane segment at 140-160 threads the bilayer; the sequence is LVSDAFHLTFGCGLLTFSLFA. At 161–186 the chain is on the cytoplasmic side; it reads MATSRKKPDHAYSYGYKRLEVLSAFT. Residues 187 to 207 traverse the membrane as a helical segment; it reads NALFLMFMSFSLAVEALHAFI. The Vacuolar segment spans residues 208-214; it reads QDESEHK. Residues 215-235 form a helical membrane-spanning segment; it reads HYLIVSAVTNLLVNLLGVWFF. At 236–259 the chain is on the cytoplasmic side; sequence RNYARVNIAYRKAEDMNYHSVCLH. Residues 260 to 280 form a helical membrane-spanning segment; the sequence is VISDSIRSAGLILASWLLSLG. The Vacuolar portion of the chain corresponds to 281–283; it reads VEN. The helical transmembrane segment at 284-304 threads the bilayer; sequence AEVLCLGLVSVTVFMLVMPLF. The Cytoplasmic portion of the chain corresponds to 305–393; it reads KATGGVLLQM…QDLTLQTDYT (89 aa).

It belongs to the cation diffusion facilitator (CDF) transporter (TC 2.A.4) family.

The protein localises to the vacuole membrane. Functionally, involved in sequestration of excess metal in the cytoplasm into vacuoles to maintain metal homeostasis. The sequence is that of Metal tolerance protein C2 (MTPC2) from Arabidopsis thaliana (Mouse-ear cress).